Here is a 250-residue protein sequence, read N- to C-terminus: MVLIAFGSIGDSFSVGSLKAYVAEFIATLLFVFAGVGSAIAYNKLTADAALDPAGLVAVAVAHAFALFVGVSIAANISGGHLNPAVTLGLAVGGNITILTGFFYWIAQLLGSTVACLLLKYVTNGLAVPTHGVAAGLNGFQGVVMEIIITFALVYTVYATAADPKKGSLGTIAPIAIGFIVGANILAAGPFSGGSMNPARSFGPAVVAGDFSQNWIYWAGPLIGGGLAGFIYGDVFIGCHTPLPTSEDYA.

2 helical membrane-spanning segments follow: residues 20–42 (AYVA…AIAY) and 55–77 (GLVA…AANI). The short motif at 83 to 85 (NPA) is the NPA 1 element. 3 consecutive transmembrane segments (helical) span residues 97-119 (TILT…CLLL), 140-162 (FQGV…ATAA), and 172-194 (IAPI…FSGG). The NPA 2 motif lies at 197–199 (NPA). Residues 215-237 (WIYWAGPLIGGGLAGFIYGDVFI) traverse the membrane as a helical segment.

It belongs to the MIP/aquaporin (TC 1.A.8) family. TIP (TC 1.A.8.10) subfamily. As to expression, roots.

Its subcellular location is the vacuole membrane. Channel protein in tonoplast. These proteins may allow the diffusion of amino acids and/or peptides from the vacuolar compartment to the cytoplasm. The polypeptide is Probable aquaporin TIP-type RB7-18C (Nicotiana tabacum (Common tobacco)).